The primary structure comprises 563 residues: Eukaryotic translation initiation factor 3 subunit D-1 (563 aa).

The disordered stretch occupies residues 98–167 (VQKPPHQRGR…GPPPKMRESS (70 aa)). Residues 100 to 121 (KPPHQRGRFRNMRNSRSGRGRN) show a composition bias toward basic residues. At threonine 128 the chain carries Phosphothreonine. Residues 291 to 305 (EFDLLTVNETSVEPP) are RNA gate.

The protein belongs to the eIF-3 subunit D family. As to quaternary structure, component of the eukaryotic translation initiation factor 3 (eIF-3) complex. The eIF-3 complex interacts with pix.

It is found in the cytoplasm. MRNA cap-binding component of the eukaryotic translation initiation factor 3 (eIF-3) complex, which is involved in protein synthesis of a specialized repertoire of mRNAs and, together with other initiation factors, stimulates binding of mRNA and methionyl-tRNAi to the 40S ribosome. The eIF-3 complex specifically targets and initiates translation of a subset of mRNAs involved in cell proliferation. In the eIF-3 complex, eif3d specifically recognizes and binds the 7-methylguanosine cap of a subset of mRNAs. The polypeptide is Eukaryotic translation initiation factor 3 subunit D-1 (Drosophila virilis (Fruit fly)).